The following is a 184-amino-acid chain: Dual-action ribosomal maturation protein DarP (184 aa).

The segment at 1–27 (MSIPDTEIPVDDDGYDENGYDRPSKSQ) is disordered. Residues 8–18 (IPVDDDGYDEN) show a composition bias toward acidic residues.

The protein belongs to the DarP family.

It is found in the cytoplasm. Member of a network of 50S ribosomal subunit biogenesis factors which assembles along the 30S-50S interface, preventing incorrect 23S rRNA structures from forming. Promotes peptidyl transferase center (PTC) maturation. In Bordetella avium (strain 197N), this protein is Dual-action ribosomal maturation protein DarP.